Consider the following 250-residue polypeptide: ATP synthase subunit a (250 aa).

Transmembrane regions (helical) follow at residues phenylalanine 26–leucine 46, phenylalanine 84–phenylalanine 104, isoleucine 114–tyrosine 134, leucine 143–isoleucine 163, phenylalanine 193–isoleucine 213, and valine 216–leucine 236.

It belongs to the ATPase A chain family. In terms of assembly, F-type ATPases have 2 components, CF(1) - the catalytic core - and CF(0) - the membrane proton channel. CF(1) has five subunits: alpha(3), beta(3), gamma(1), delta(1), epsilon(1). CF(0) has three main subunits: a(1), b(2) and c(9-12). The alpha and beta chains form an alternating ring which encloses part of the gamma chain. CF(1) is attached to CF(0) by a central stalk formed by the gamma and epsilon chains, while a peripheral stalk is formed by the delta and b chains.

The protein resides in the cell inner membrane. Functionally, key component of the proton channel; it plays a direct role in the translocation of protons across the membrane. The chain is ATP synthase subunit a from Sinorhizobium fredii (strain NBRC 101917 / NGR234).